A 132-amino-acid chain; its full sequence is Cytochrome B5 isoform C (132 aa).

The Cytochrome b5 heme-binding domain occupies 2 to 78; the sequence is ANLISFHDVA…MKKYCIGDVD (77 aa). Heme contacts are provided by H37 and H61. Residues 110-129 traverse the membrane as a helical segment; it reads LLIYLIPLLILGVAFALRFY.

This sequence belongs to the cytochrome b5 family. Interacts with CER1, BI-1, FAH1 and FAH2.

The protein localises to the endoplasmic reticulum membrane. Functionally, membrane bound hemoprotein which function as an electron carrier for several membrane bound oxygenases, including fatty acid desaturases. This Arabidopsis thaliana (Mouse-ear cress) protein is Cytochrome B5 isoform C.